Consider the following 399-residue polypeptide: Phosphoglycerate kinase (399 aa).

Substrate is bound by residues 20-22, Arg-35, 58-61, Arg-117, and Arg-154; these read DFN and HLGR. ATP contacts are provided by residues Lys-204, Gly-295, Glu-326, and 355–358; that span reads GGDS.

Belongs to the phosphoglycerate kinase family. Monomer.

The protein resides in the cytoplasm. The catalysed reaction is (2R)-3-phosphoglycerate + ATP = (2R)-3-phospho-glyceroyl phosphate + ADP. It participates in carbohydrate degradation; glycolysis; pyruvate from D-glyceraldehyde 3-phosphate: step 2/5. The sequence is that of Phosphoglycerate kinase from Beutenbergia cavernae (strain ATCC BAA-8 / DSM 12333 / CCUG 43141 / JCM 11478 / NBRC 16432 / NCIMB 13614 / HKI 0122).